Here is a 285-residue protein sequence, read N- to C-terminus: Ribosomal RNA large subunit methyltransferase F (285 aa).

This sequence belongs to the methyltransferase superfamily. METTL16/RlmF family.

The protein localises to the cytoplasm. The catalysed reaction is adenosine(1618) in 23S rRNA + S-adenosyl-L-methionine = N(6)-methyladenosine(1618) in 23S rRNA + S-adenosyl-L-homocysteine + H(+). Specifically methylates the adenine in position 1618 of 23S rRNA. The polypeptide is Ribosomal RNA large subunit methyltransferase F (Christiangramia forsetii (strain DSM 17595 / CGMCC 1.15422 / KT0803) (Gramella forsetii)).